We begin with the raw amino-acid sequence, 507 residues long: NADH-quinone oxidoreductase subunit N (507 aa).

15 consecutive transmembrane segments (helical) span residues 17 to 37, 46 to 66, 81 to 101, 113 to 133, 134 to 154, 168 to 188, 190 to 210, 211 to 231, 245 to 265, 279 to 299, 307 to 327, 334 to 354, 392 to 412, 425 to 445, and 478 to 498; these read LVTLSPLILLAAAAVVVMLTA, VMILTLAGLVLSFMALFLSQG, YALFFIGLIVVATFVVAILCY, ALYILLLLAALGGGVLVASSH, FASFLLGLELLSISLFALIAY, YLILAGFSSGLLLFGMALVYA, LGTMQFVKIGTMLAAPGAALE, LYGLAGLALIVTGVGFKLALV, PVPITAFIATASKGAMLVLLL, ITFALSLIAVATILVGNLLAL, ILAYSSIAQLGYLLVGFLAFD, VAYFLTAYFVTMLGAFGVVTV, AGVFTAMLLSLAGIPLTMGFI, SLWMPVITLVIGSIIGLFYYM, and LAALALLLIWLGIFPAQLIGV.

Belongs to the complex I subunit 2 family. NDH-1 is composed of 14 different subunits. Subunits NuoA, H, J, K, L, M, N constitute the membrane sector of the complex.

It is found in the cell inner membrane. The catalysed reaction is a quinone + NADH + 5 H(+)(in) = a quinol + NAD(+) + 4 H(+)(out). In terms of biological role, NDH-1 shuttles electrons from NADH, via FMN and iron-sulfur (Fe-S) centers, to quinones in the respiratory chain. The immediate electron acceptor for the enzyme in this species is believed to be ubiquinone. Couples the redox reaction to proton translocation (for every two electrons transferred, four hydrogen ions are translocated across the cytoplasmic membrane), and thus conserves the redox energy in a proton gradient. This Nitrosospira multiformis (strain ATCC 25196 / NCIMB 11849 / C 71) protein is NADH-quinone oxidoreductase subunit N.